Here is a 149-residue protein sequence, read N- to C-terminus: MSKVSQQNSTPGVNGISVIHTQAHASGLQQVPQLVPAGPGGGGKAVPPSKQSKKSSPMDRNSDEYRQRRERNNMAVKKSRLKSKQKAQDTLQRVNQLKEENERLEAKIKLLTKELSVLKDLFLEHAHNLADNVQPSSTENTTNPDKAGQ.

The segment covering M1–G12 has biased composition (polar residues). The tract at residues M1–Q92 is disordered. A Glycyl lysine isopeptide (Lys-Gly) (interchain with G-Cter in SUMO2) cross-link involves residue K3. Positions L28–A37 are enriched in low complexity. Residues S56 to N72 show a composition bias toward basic and acidic residues. The region spanning S62–H125 is the bZIP domain. Positions R66–R93 are basic motif. The interval L97 to L118 is leucine-zipper. The segment at N128–Q149 is disordered. Positions D131–Q149 are enriched in polar residues.

This sequence belongs to the bZIP family. C/EBP subfamily. As to quaternary structure, binds DNA as a dimer and can form stable heterodimers with CEBPA and CEBPB. Interacts with ZNF638; this interaction increases transcriptional activation.

The protein localises to the nucleus. Functionally, transcription factor that binds to the promoter and the enhancer regions of target genes. Binds to the enhancer element PRE-I (positive regulatory element-I) of the IL-4 gene. Binds to the promoter and the enhancer of the immunoglobulin heavy chain. Binds to GPE1, a cis-acting element in the G-CSF gene promoter. The protein is CCAAT/enhancer-binding protein gamma (CEBPG) of Bos taurus (Bovine).